The primary structure comprises 374 residues: Alcohol dehydrogenase 1 (374 aa).

Residue Ser1 is modified to N-acetylserine. Zn(2+)-binding residues include Cys46, His67, Cys97, Cys100, Cys103, Cys111, and Cys174. NAD(+) is bound by residues 199–204 (GLGGVG), Asp223, Lys228, 292–294 (VGV), and Arg369.

Belongs to the zinc-containing alcohol dehydrogenase family. Class-I subfamily. Homodimer. Requires Zn(2+) as cofactor.

Its subcellular location is the cytoplasm. The catalysed reaction is a primary alcohol + NAD(+) = an aldehyde + NADH + H(+). It carries out the reaction a secondary alcohol + NAD(+) = a ketone + NADH + H(+). The sequence is that of Alcohol dehydrogenase 1 (ADH1) from Struthio camelus (Common ostrich).